The primary structure comprises 896 residues: Myelin regulatory factor-like protein (896 aa).

The NDT80 DNA-binding region spans 111-403 (GLPHRTFHNC…SNPGQFENDI (293 aa)). In terms of domain architecture, Peptidase S74 spans 449-557 (SDSRAKQNVQ…KLTNNLEERI (109 aa)). Positions 541-573 (GAVKQLCKLTNNLEERIEELEIWNRKLARLKRL) form a coiled coil. A helical transmembrane segment spans residues 622–638 (VFQSLVITLIAVMAFCL). Polar residues predominate over residues 648 to 658 (APSSNLTSSQE). Positions 648 to 672 (APSSNLTSSQEPALPSTASPSAPNT) are disordered. Over residues 659–672 (PALPSTASPSAPNT) the composition is skewed to low complexity.

Belongs to the MRF family.

The protein resides in the membrane. The protein is Myelin regulatory factor-like protein (MYRFL) of Bos taurus (Bovine).